A 122-amino-acid chain; its full sequence is Large ribosomal subunit protein uL14 (122 aa).

It belongs to the universal ribosomal protein uL14 family. In terms of assembly, part of the 50S ribosomal subunit. Forms a cluster with proteins L3 and L19. In the 70S ribosome, L14 and L19 interact and together make contacts with the 16S rRNA in bridges B5 and B8.

In terms of biological role, binds to 23S rRNA. Forms part of two intersubunit bridges in the 70S ribosome. In Ruegeria pomeroyi (strain ATCC 700808 / DSM 15171 / DSS-3) (Silicibacter pomeroyi), this protein is Large ribosomal subunit protein uL14.